The primary structure comprises 142 residues: Sec-independent protein translocase protein TatB (142 aa).

A helical membrane pass occupies residues 2–22 (FANVGWGEMLVLVIAGLVILG). The tract at residues 89–142 (DDSIFTGKFDQNGKSEKPEQKPEKPQSAPGPAAAVPDQPAGGRSGSTPYDTDAT) is disordered. Over residues 99–112 (QNGKSEKPEQKPEK) the composition is skewed to basic and acidic residues. The segment covering 133–142 (GSTPYDTDAT) has biased composition (polar residues).

Belongs to the TatB family. The Tat system comprises two distinct complexes: a TatABC complex, containing multiple copies of TatA, TatB and TatC subunits, and a separate TatA complex, containing only TatA subunits. Substrates initially bind to the TatABC complex, which probably triggers association of the separate TatA complex to form the active translocon.

It localises to the cell membrane. In terms of biological role, part of the twin-arginine translocation (Tat) system that transports large folded proteins containing a characteristic twin-arginine motif in their signal peptide across membranes. Together with TatC, TatB is part of a receptor directly interacting with Tat signal peptides. TatB may form an oligomeric binding site that transiently accommodates folded Tat precursor proteins before their translocation. This Mycolicibacterium vanbaalenii (strain DSM 7251 / JCM 13017 / BCRC 16820 / KCTC 9966 / NRRL B-24157 / PYR-1) (Mycobacterium vanbaalenii) protein is Sec-independent protein translocase protein TatB.